We begin with the raw amino-acid sequence, 276 residues long: Large ribosomal subunit protein uL2 (276 aa).

A disordered region spans residues 226 to 276 (MNSVDHPHGGGEGKTSGGRHPVSPWGTPTKGYKTRSNKRTDKLILRHRNKG).

This sequence belongs to the universal ribosomal protein uL2 family. Part of the 50S ribosomal subunit. Forms a bridge to the 30S subunit in the 70S ribosome.

Its function is as follows. One of the primary rRNA binding proteins. Required for association of the 30S and 50S subunits to form the 70S ribosome, for tRNA binding and peptide bond formation. It has been suggested to have peptidyltransferase activity; this is somewhat controversial. Makes several contacts with the 16S rRNA in the 70S ribosome. In Vesicomyosocius okutanii subsp. Calyptogena okutanii (strain HA), this protein is Large ribosomal subunit protein uL2.